We begin with the raw amino-acid sequence, 2442 residues long: Piezo-type mechanosensitive ion channel component 1 (2442 aa).

At 1-5 (MTVPP) the chain is on the extracellular side. A helical membrane pass occupies residues 6-26 (LLKSCVVKLLLPAALLAAAII). Residue Arg-27 is a topological domain, cytoplasmic. The helical transmembrane segment at 28–48 (PSFLSIGYVLLALVSAVLPPI) threads the bilayer. Residues 49–56 (RKSLALPK) lie on the Extracellular side of the membrane. The chain crosses the membrane as a helical span at residues 57–77 (LVGTFVIITFLFCLAVALGVG). Residues 78–122 (SYQISEQVVHKNDRTYICNRSDTTLFRSIGLVRFHPTGTFESTRA) lie on the Cytoplasmic side of the membrane. A helical membrane pass occupies residues 123–143 (FLPEIIATSAALLTIIIVMFL). Topologically, residues 144–173 (SHRDEQLDVVGDVVTVRSESGREQRRQRKL) are extracellular. A helical membrane pass occupies residues 174-196 (AAIMWSAIGNSLRRLTNFVLFLF). Residues 197–198 (TA) lie on the Cytoplasmic side of the membrane. Residues 199–219 (YVGIVKPSLSNSIYFLAFLFI) traverse the membrane as a helical segment. The Extracellular segment spans residues 220-239 (STWWSTYTPLRHGVYNQIKK). A helical membrane pass occupies residues 240–260 (FLIFYSALHFLVLYTYQIPIV). The Cytoplasmic segment spans residues 261–303 (HHSWLPTGSFLPRLFGLTVLMDSSCPEWWKFPFVAPDFNDDDL). The chain crosses the membrane as a helical span at residues 304–324 (IMKWPLYANPIVVLVFFYLTV). The Extracellular portion of the chain corresponds to 325–454 (AQYKFTRNGS…GDKESAASKG (130 aa)). Residues Asn-332, Asn-392, and Asn-440 are each glycosylated (N-linked (GlcNAc...) asparagine). The interval 389 to 417 (LLSNASSSANDDEQGRARSRSPLRNGEEQ) is disordered. The chain crosses the membrane as a helical span at residues 455 to 475 (MIAVMTFVIFHSYSIALTAMM). Over 476–478 (TWA) the chain is Cytoplasmic. A helical transmembrane segment spans residues 479-499 (LLYHSIFGLILLILTCILWIF). The Extracellular segment spans residues 500 to 506 (RDTRKSS). A helical membrane pass occupies residues 507-527 (FAMAPIILMYIEFLLILQYFL). Residues 528–552 (SMDIHAEIGDPAWMNFVGIEWTTLP) lie on the Cytoplasmic side of the membrane. Residues 553-573 (VHAVIILCVQTLLTLPVFLLL) form a helical membrane-spanning segment. At 574-633 (RLARREKFYESLSDYERQRRINSYGTFGASKTGAGGVAVAKFQDPKSRKFAAFVEYLSNK) the chain is on the extracellular side. The chain crosses the membrane as a helical span at residues 634 to 654 (VSVYFIFVVSVVLLVVSTCFA). Topologically, residues 655-656 (PN) are cytoplasmic. Residues 657-677 (FYNILFFALWALNLIYLKFSF) form a helical membrane-spanning segment. At 678-683 (RLYRGL) the chain is on the extracellular side. A helical membrane pass occupies residues 684–704 (AYAFWLTLTFYTSIVIIALYI). The Cytoplasmic segment spans residues 705-739 (YQFPGVSQWIIRNTSLSQEWLNAIGLVDFRAIGES). The chain crosses the membrane as a helical span at residues 740-760 (GALFLQLLAPIALFVVTMLQL). Residues 761–832 (KFFHGPWSRA…WRFFEVHISK (72 aa)) lie on the Extracellular side of the membrane. The interval 768–798 (SRATSPRRAENDPPTSTTEAAAVASTSGTQG) is disordered. Residues 782–794 (TSTTEAAAVASTS) show a composition bias toward low complexity. Residue Asn-816 is glycosylated (N-linked (GlcNAc...) asparagine). Residues 833–853 (IVFVIIAIFIANNINALYIPL) form a helical membrane-spanning segment. Residues 854–874 (VILLSLAICLPSAADGIFSLF) are Cytoplasmic-facing. The helical transmembrane segment at 875 to 895 (MCAYLFLVALSKMIYQLDIVP) threads the bilayer. Residues 896-931 (ELSQIDRGVGADNCSHGNISMPEWFGLKKEVEGTEP) are Extracellular-facing. N-linked (GlcNAc...) asparagine glycans are attached at residues Asn-908 and Asn-913. Residues 932–952 (IYMLFGVIVSIIALAFQSIVI) traverse the membrane as a helical segment. Over 953-990 (YRQRHYRASLGLPESMRAKVFPDFHHSHFDRSLKNAIQ) the chain is Cytoplasmic. Residues 991-1011 (FLIDYGFYKFGLEITMIAIGI) traverse the membrane as a helical segment. Position 1012 (Asp-1012) is a topological domain, extracellular. The chain crosses the membrane as a helical span at residues 1013–1033 (IFNRMDALAAIQCFWLVLFAL). Residues 1034–1041 (NKRVFVRR) lie on the Cytoplasmic side of the membrane. The helical transmembrane segment at 1042 to 1062 (IWVFYVIYMAILYPLQFFSYV) threads the bilayer. Residues 1063 to 1096 (GLPPDSCIEYPWSYWIPSYSDDARFNLSYLLNLS) are Extracellular-facing. 2 N-linked (GlcNAc...) asparagine glycosylation sites follow: Asn-1088 and Asn-1094. A helical transmembrane segment spans residues 1097-1117 (IYGVNWPSAYLIGDFFVLLLA). Residues 1118–1160 (SCQLAVFRREGEDNDSIYNDGNFVIKPENPQYDFIDTKKSYVD) lie on the Cytoplasmic side of the membrane. A helical transmembrane segment spans residues 1161 to 1181 (YFKSFVFHYGHWITLMSTLAA). Topologically, residues 1182-1187 (GIAGTS) are extracellular. A helical membrane pass occupies residues 1188–1210 (LFALGYIIFTLTMLWSGNNLYVM). Residues 1211–1231 (NSTLRSFEHTLKRWNALLGYT) lie on the Cytoplasmic side of the membrane. The helical transmembrane segment at 1232 to 1252 (LFTITMKVCLQIFGCVFLSWF) threads the bilayer. The Extracellular portion of the chain corresponds to 1253–1299 (DQSGGWGKTLCIVRQLFSITCVNNECHVLKELEDFSKACAVETKEGN). Residues 1300 to 1320 (IGFDVIALSFLVFQIRIFHSW) form a helical membrane-spanning segment. At 1321–1615 (YFQHCMVEYR…VVNCIGAHTD (295 aa)) the chain is on the cytoplasmic side. The segment at 1463 to 1502 (DTIKDPDSRALIAVSEPEARKPGGTEETDGDEDEDNKDSK) is disordered. Acidic residues predominate over residues 1488–1498 (EETDGDEDEDN). Residues 1616-1636 (ILCYFFAIMTQVMTGGLITLP) form a helical membrane-spanning segment. Over 1637–1654 (LPLMSLFWGNLSNPRPSK) the chain is Extracellular. Residue Asn-1646 is glycosylated (N-linked (GlcNAc...) asparagine). The helical transmembrane segment at 1655 to 1675 (FFWVTMITYTECVIVIKFVCQ) threads the bilayer. At 1676–1706 (FAFMPYNSITWRTEHQMDPMSLDKLFGVSQR) the chain is on the cytoplasmic side. A helical transmembrane segment spans residues 1707 to 1727 (DSFALWDIVLLFSLFFHRYML). Over 1728–1833 (RKLGLWKDAN…KFRYIRDLYP (106 aa)) the chain is Extracellular. Asn-1737 carries an N-linked (GlcNAc...) asparagine glycan. Residues 1834–1854 (IMFGIDVICFLIMTFGYSAFG) traverse the membrane as a helical segment. Over 1855 to 1866 (EGGSGNVLDDVK) the chain is Cytoplasmic. The chain crosses the membrane as a helical span at residues 1867-1887 (ASRIPVTLVVMLVGMTLAIII). The Extracellular segment spans residues 1888 to 1900 (DRALYLRKSVVGK). Residues 1901–1921 (LIYQVLMIAFLHIWVFLVLPN) form a helical membrane-spanning segment. Topologically, residues 1922–1930 (MTRRSAISN) are cytoplasmic. A helical transmembrane segment spans residues 1931–1951 (HVAQALYVIKSCYFLVSAWQI). Residues 1952-2046 (RNGYPELCIG…KGKLVKYMMG (95 aa)) are Extracellular-facing. Residues 2047-2067 (FPIIIGVVIFIFSPLLLWSLL) form a helical membrane-spanning segment. The Cytoplasmic segment spans residues 2068-2346 (NQIGTISMPE…VGFIDRAFPS (279 aa)). Residues 2347–2367 (FLAKVFKGGVIAVYLSVILVV) traverse the membrane as a helical segment. The Extracellular portion of the chain corresponds to 2368-2442 (GRGLVRGIFT…WTRMSKKKQE (75 aa)).

The protein belongs to the PIEZO (TC 1.A.75) family. In terms of tissue distribution, expressed in the pharyngeal-intestinal and spermathecal-uterine valves and in multiple reproductive tissues including the germline, somatic oviduct, and spermatheca. During reproduction, it is expressed in sheath cells, sperm, both spermathecal valves and the spermathecal bag cells.

Its subcellular location is the cell membrane. In terms of biological role, pore-forming subunit of a mechanosensitive non-specific cation channel. Generates currents characterized by a linear current-voltage relationship. Plays a role in reproduction by positively regulating inter-tissue signaling to promote oocyte maturation, ovulation and fertilization, and sperm navigation from and to the spermatheca. May play a role in regulating cytosolic and endoplasmic reticulum calcium ion release. This chain is Piezo-type mechanosensitive ion channel component 1, found in Caenorhabditis elegans.